The chain runs to 203 residues: Small ribosomal subunit protein uS4 (203 aa).

Residues 93-153 (RRLDNIVYRL…DKSKNLQQVK (61 aa)) form the S4 RNA-binding domain.

It belongs to the universal ribosomal protein uS4 family. Part of the 30S ribosomal subunit. Contacts protein S5. The interaction surface between S4 and S5 is involved in control of translational fidelity.

Functionally, one of the primary rRNA binding proteins, it binds directly to 16S rRNA where it nucleates assembly of the body of the 30S subunit. In terms of biological role, with S5 and S12 plays an important role in translational accuracy. In Lactobacillus gasseri (strain ATCC 33323 / DSM 20243 / BCRC 14619 / CIP 102991 / JCM 1131 / KCTC 3163 / NCIMB 11718 / NCTC 13722 / AM63), this protein is Small ribosomal subunit protein uS4.